A 361-amino-acid polypeptide reads, in one-letter code: MAGNTLGQLFRVTTFGESHGLALGCIIDGVPPGIALSEADLQHDLDRRRPGTSRYTTQRREPDQVKILSGVFEGVTTGTSIGLLIENTDQRSQDYSAIKDVFRPGHADYTYEQKYGLRDYRGGGRSSARETAMRVAAGAIAKKYLAQKFGIVIRACLTQMGDIPLEIKDWAQVEQNPFFSPDVDKLEALDELMRALKKEGDSIGAKVTVVADNVPPGLGEPVFDRLDADIAHALMSINAVKGVEIGEGFGVVALKGSENRDEITKEGFQSNHAGGILGGISSGQQIVANIALKPTSSITVPGRTVNRFGEEVEMITRGRHDPCVGIRAVPIAEAMMAIVLMDHLLRHRAQNADVTTTLPRW.

NADP(+) contacts are provided by Arg48 and Arg54. Residues Arg125–Ser127, Asn238–Ala239, Gly278, Lys293–Ser297, and Arg319 contribute to the FMN site.

This sequence belongs to the chorismate synthase family. As to quaternary structure, homotetramer. Requires FMNH2 as cofactor.

The enzyme catalyses 5-O-(1-carboxyvinyl)-3-phosphoshikimate = chorismate + phosphate. It functions in the pathway metabolic intermediate biosynthesis; chorismate biosynthesis; chorismate from D-erythrose 4-phosphate and phosphoenolpyruvate: step 7/7. Catalyzes the anti-1,4-elimination of the C-3 phosphate and the C-6 proR hydrogen from 5-enolpyruvylshikimate-3-phosphate (EPSP) to yield chorismate, which is the branch point compound that serves as the starting substrate for the three terminal pathways of aromatic amino acid biosynthesis. This reaction introduces a second double bond into the aromatic ring system. The protein is Chorismate synthase of Cronobacter sakazakii (strain ATCC BAA-894) (Enterobacter sakazakii).